The chain runs to 84 residues: MSVITKVAAAKNKIVVGAGLLMASAGAFAADDGTSTATSYATEAMNSLKTQATDLIDQTWPVVTSVAVAGLAIRLFKKFSSKAV.

Positions 1-29 (MSVITKVAAAKNKIVVGAGLLMASAGAFA) are cleaved as a signal peptide. Residues 30-58 (ADDGTSTATSYATEAMNSLKTQATDLIDQ) lie on the Periplasmic side of the membrane. The chain crosses the membrane as a helical span at residues 59–76 (TWPVVTSVAVAGLAIRLF). The Cytoplasmic portion of the chain corresponds to 77-84 (KKFSSKAV).

The protein belongs to the inovirus capsid protein family. As to quaternary structure, homomultimerizes. There are several thousands of this protein in the phage capsid.

Its subcellular location is the virion. The protein localises to the host membrane. In terms of biological role, self assembles to form a helical capsid wrapping up the viral genomic DNA. The capsid displays a filamentous structure with a length of 760-1950 nm and a width of 6-8 nm. The virion assembly and budding take place at the host inner membrane. The sequence is that of Capsid protein G8P (VIII) from Escherichia coli (Bacteriophage I2-2).